The primary structure comprises 277 residues: Large ribosomal subunit protein uL2 (277 aa).

Disordered regions lie at residues 1 to 58 (MGIR…GGGH) and 223 to 277 (GVVM…GKKR). The segment covering 23-33 (EITRSEPEKSL) has biased composition (basic and acidic residues). Basic residues predominate over residues 37-58 (LHGRGGRNAHGKITTRHKGGGH). Residues 251 to 267 (GKPEGRTRRNKPSDKLI) show a composition bias toward basic and acidic residues. Residues 268–277 (VRRRRTGKKR) are compositionally biased toward basic residues.

Belongs to the universal ribosomal protein uL2 family. As to quaternary structure, part of the 50S ribosomal subunit. Forms a bridge to the 30S subunit in the 70S ribosome.

One of the primary rRNA binding proteins. Required for association of the 30S and 50S subunits to form the 70S ribosome, for tRNA binding and peptide bond formation. It has been suggested to have peptidyltransferase activity; this is somewhat controversial. Makes several contacts with the 16S rRNA in the 70S ribosome. This chain is Large ribosomal subunit protein uL2, found in Saccharopolyspora erythraea (strain ATCC 11635 / DSM 40517 / JCM 4748 / NBRC 13426 / NCIMB 8594 / NRRL 2338).